Consider the following 165-residue polypeptide: Chorismate pyruvate-lyase (165 aa).

Substrate-binding residues include M35, R77, L115, and E156.

This sequence belongs to the UbiC family. As to quaternary structure, monomer.

The protein resides in the cytoplasm. The enzyme catalyses chorismate = 4-hydroxybenzoate + pyruvate. Its pathway is cofactor biosynthesis; ubiquinone biosynthesis. Its function is as follows. Removes the pyruvyl group from chorismate, with concomitant aromatization of the ring, to provide 4-hydroxybenzoate (4HB) for the ubiquinone pathway. The protein is Chorismate pyruvate-lyase of Escherichia coli O127:H6 (strain E2348/69 / EPEC).